The chain runs to 206 residues: Macrophage immunometabolism regulator (206 aa).

Met1 is subject to N-acetylmethionine. Residues 1 to 41 form a disordered region; it reads MEVDINGESRSTLTTLPFPGAEANSPGKAEAEKPRCSSTPC. 3 positions are modified to phosphoserine: Ser25, Ser140, and Ser167.

Belongs to the UNC119-binding protein family. Interacts with UNC119 and UNC119B; interaction preferentially takes place when UNC119 and UNC119B are unliganded with myristoylated proteins.

Its subcellular location is the cytoplasm. The protein resides in the cell projection. It is found in the cilium. Functionally, regulates the macrophage function, by enhancing the resolution of inflammation and wound repair functions mediated by M2 macrophages. The regulation of macrophage function is, due at least in part, to its ability to inhibit glycolysis. May also play a role in trafficking of proteins via its interaction with UNC119 and UNC119B cargo adapters: may help the release of UNC119 and UNC119B cargo or the recycling of UNC119 and UNC119B. May play a role in ciliary membrane localization via its interaction with UNC119B and protein transport into photoreceptor cells. The chain is Macrophage immunometabolism regulator (MACIR) from Pongo abelii (Sumatran orangutan).